A 407-amino-acid chain; its full sequence is Semenogelin-2 (407 aa).

A signal peptide spans 1–23 (MKSIILFVLSLVLILEKQAAVMG). Disordered stretches follow at residues 25–60 (KDGS…TKSK), 133–158 (GQAH…LSSQ), 173–192 (KEQA…GSQS), and 272–407 (NLNQ…NKIS). Composition is skewed to polar residues over residues 31 to 40 (QLPSGSSQFP), 137 to 158 (CGTQ…LSSQ), and 174 to 192 (EQAS…GSQS). A compositionally biased stretch (basic and acidic residues) spans 292–310 (RTEERQLNHGEKSVQKDVS). The segment covering 325–334 (KSQNQVTIHS) has biased composition (polar residues). Residues 335 to 345 (QDQEHGHKENK) show a composition bias toward basic and acidic residues. A compositionally biased stretch (polar residues) spans 372–397 (GSISIQTEEQIHGKSQNXVRIPSQAQ).

Belongs to the semenogelin family. In terms of assembly, interacts with SERPINA5.

It is found in the secreted. Functionally, participates in the formation of a gel matrix (sperm coagulum) entrapping the accessory gland secretions and ejaculated spermatozoa. This is Semenogelin-2 (SEMG2) from Pan troglodytes (Chimpanzee).